Consider the following 76-residue polypeptide: MKLTCMMIVAVLFLTAWTFVTAITSNGLENLFPKAHHEMKNPEASKLNKRCVPYEGPCNWLTQNCCDATCVVFWCL.

Positions 1-22 (MKLTCMMIVAVLFLTAWTFVTA) are cleaved as a signal peptide. The propeptide occupies 23 to 48 (ITSNGLENLFPKAHHEMKNPEASKLN). Cystine bridges form between C51/C66, C58/C70, and C65/C75.

Belongs to the conotoxin O1 superfamily. Expressed by the venom duct.

The protein resides in the secreted. Omega-conotoxins act at presynaptic membranes, they bind and block voltage-gated calcium channels (Cav). The chain is Omega-conotoxin-like TxO5 from Conus textile (Cloth-of-gold cone).